The following is a 176-amino-acid chain: NAD(P)H-quinone oxidoreductase subunit 6, chloroplastic (176 aa).

5 consecutive transmembrane segments (helical) span residues 10–30 (ILML…VLLT), 33–53 (IYSA…YFLL), 60–80 (VAQL…AVMF), 95–115 (IGDG…MTTI), and 152–172 (FYLP…GAIT).

It belongs to the complex I subunit 6 family. As to quaternary structure, NDH is composed of at least 16 different subunits, 5 of which are encoded in the nucleus.

It localises to the plastid. The protein resides in the chloroplast thylakoid membrane. The catalysed reaction is a plastoquinone + NADH + (n+1) H(+)(in) = a plastoquinol + NAD(+) + n H(+)(out). The enzyme catalyses a plastoquinone + NADPH + (n+1) H(+)(in) = a plastoquinol + NADP(+) + n H(+)(out). In terms of biological role, NDH shuttles electrons from NAD(P)H:plastoquinone, via FMN and iron-sulfur (Fe-S) centers, to quinones in the photosynthetic chain and possibly in a chloroplast respiratory chain. The immediate electron acceptor for the enzyme in this species is believed to be plastoquinone. Couples the redox reaction to proton translocation, and thus conserves the redox energy in a proton gradient. The sequence is that of NAD(P)H-quinone oxidoreductase subunit 6, chloroplastic (ndhG) from Triticum aestivum (Wheat).